The chain runs to 400 residues: tRNA pseudouridine synthase Pus10 (400 aa).

Positions 77 to 194 constitute a THUMP domain; it reads QVYVELFGSP…DGSVSVQPRR (118 aa). Y301 lines the substrate pocket.

The protein belongs to the pseudouridine synthase Pus10 family.

It carries out the reaction uridine(54) in tRNA = pseudouridine(54) in tRNA. The catalysed reaction is uridine(55) in tRNA = pseudouridine(55) in tRNA. Functionally, responsible for synthesis of pseudouridine from uracil-54 and uracil-55 in the psi GC loop of transfer RNAs. This chain is tRNA pseudouridine synthase Pus10, found in Acidilobus saccharovorans (strain DSM 16705 / JCM 18335 / VKM B-2471 / 345-15).